A 395-amino-acid polypeptide reads, in one-letter code: Succinyl-diaminopimelate desuccinylase 2 (395 aa).

Residue histidine 79 participates in Zn(2+) binding. Residue aspartate 81 is part of the active site. Aspartate 112 contributes to the Zn(2+) binding site. Glutamate 145 (proton acceptor) is an active-site residue. Residues glutamate 146, glutamate 174, and histidine 363 each coordinate Zn(2+).

It belongs to the peptidase M20A family. DapE subfamily. In terms of assembly, homodimer. Requires Zn(2+) as cofactor. Co(2+) serves as cofactor.

The catalysed reaction is N-succinyl-(2S,6S)-2,6-diaminopimelate + H2O = (2S,6S)-2,6-diaminopimelate + succinate. The protein operates within amino-acid biosynthesis; L-lysine biosynthesis via DAP pathway; LL-2,6-diaminopimelate from (S)-tetrahydrodipicolinate (succinylase route): step 3/3. Its function is as follows. Catalyzes the hydrolysis of N-succinyl-L,L-diaminopimelic acid (SDAP), forming succinate and LL-2,6-diaminopimelate (DAP), an intermediate involved in the bacterial biosynthesis of lysine and meso-diaminopimelic acid, an essential component of bacterial cell walls. The chain is Succinyl-diaminopimelate desuccinylase 2 from Ruegeria sp. (strain TM1040) (Silicibacter sp.).